Reading from the N-terminus, the 387-residue chain is Alanine racemase (387 aa).

Lysine 38 serves as the catalytic Proton acceptor; specific for D-alanine. The residue at position 38 (lysine 38) is an N6-(pyridoxal phosphate)lysine. A substrate-binding site is contributed by arginine 136. Tyrosine 267 serves as the catalytic Proton acceptor; specific for L-alanine. Methionine 315 provides a ligand contact to substrate.

This sequence belongs to the alanine racemase family. The cofactor is pyridoxal 5'-phosphate.

It catalyses the reaction L-alanine = D-alanine. It participates in amino-acid biosynthesis; D-alanine biosynthesis; D-alanine from L-alanine: step 1/1. Catalyzes the interconversion of L-alanine and D-alanine. May also act on other amino acids. The protein is Alanine racemase (alr) of Clostridium novyi (strain NT).